The primary structure comprises 474 residues: Coronin-1C (474 aa).

WD repeat units follow at residues 25 to 70 (DDIR…GRID), 78 to 118 (GHTG…LTLS), 128 to 168 (GHSK…ALIN), 172 to 202 (MHSD…RVID), 215 to 249 (AHEG…ALWN), and 263 to 303 (DTSN…PYVH). Residues 436-474 (QNEAKLDEILKEIKSIKDTICNQDERISKLEQQMAKIAA) adopt a coiled-coil conformation. An N6-acetyllysine modification is found at Lys446.

This sequence belongs to the WD repeat coronin family. Binds F-actin. Interacts with RCC2. Interacts preferentially with nucleotide-free and GDP-bound RAC1. Interacts with VIM (via head domain). Isoform 1 and isoform 2 appear as homotrimers, while isoform 3 seems to exist as monomers. Interacts with MICAL2; this interaction recruits MICAL2 to the actin filaments. As to expression, ubiquitous.

It is found in the cell membrane. The protein localises to the cell projection. It localises to the lamellipodium. The protein resides in the ruffle membrane. Its subcellular location is the cytoplasm. It is found in the cytoskeleton. The protein localises to the cell cortex. It localises to the endosome membrane. The protein resides in the sarcolemma. Its subcellular location is the myofibril. It is found in the sarcomere. The protein localises to the synapse. In terms of biological role, plays a role in directed cell migration by regulating the activation and subcellular location of RAC1. Increases the presence of activated RAC1 at the leading edge of migrating cells. Required for normal organization of the cytoskeleton, including the actin cytoskeleton, microtubules and the vimentin intermediate filaments. Plays a role in endoplasmic reticulum-associated endosome fission: localizes to endosome membrane tubules and promotes recruitment of TMCC1, leading to recruitment of the endoplasmic reticulum to endosome tubules for fission. Endosome membrane fission of early and late endosomes is essential to separate regions destined for lysosomal degradation from carriers to be recycled to the plasma membrane. Required for normal cell proliferation, cell migration, and normal formation of lamellipodia. Required for normal distribution of mitochondria within cells. Involved in myogenic differentiation. In Homo sapiens (Human), this protein is Coronin-1C.